Consider the following 285-residue polypeptide: Bifunctional protein FolD (285 aa).

NADP(+)-binding positions include 165–167 (GRG), threonine 192, and valine 233.

This sequence belongs to the tetrahydrofolate dehydrogenase/cyclohydrolase family. As to quaternary structure, homodimer.

The catalysed reaction is (6R)-5,10-methylene-5,6,7,8-tetrahydrofolate + NADP(+) = (6R)-5,10-methenyltetrahydrofolate + NADPH. It carries out the reaction (6R)-5,10-methenyltetrahydrofolate + H2O = (6R)-10-formyltetrahydrofolate + H(+). The protein operates within one-carbon metabolism; tetrahydrofolate interconversion. In terms of biological role, catalyzes the oxidation of 5,10-methylenetetrahydrofolate to 5,10-methenyltetrahydrofolate and then the hydrolysis of 5,10-methenyltetrahydrofolate to 10-formyltetrahydrofolate. This chain is Bifunctional protein FolD, found in Mycobacterium sp. (strain MCS).